Reading from the N-terminus, the 191-residue chain is Xanthine phosphoribosyltransferase (191 aa).

Residues leucine 20 and asparagine 27 each coordinate xanthine. 128 to 132 (ANGQA) contributes to the 5-phospho-alpha-D-ribose 1-diphosphate binding site. Position 156 (lysine 156) interacts with xanthine.

Belongs to the purine/pyrimidine phosphoribosyltransferase family. Xpt subfamily. Homodimer.

The protein localises to the cytoplasm. It catalyses the reaction XMP + diphosphate = xanthine + 5-phospho-alpha-D-ribose 1-diphosphate. It functions in the pathway purine metabolism; XMP biosynthesis via salvage pathway; XMP from xanthine: step 1/1. In terms of biological role, converts the preformed base xanthine, a product of nucleic acid breakdown, to xanthosine 5'-monophosphate (XMP), so it can be reused for RNA or DNA synthesis. The protein is Xanthine phosphoribosyltransferase of Acinetobacter baylyi (strain ATCC 33305 / BD413 / ADP1).